Reading from the N-terminus, the 379-residue chain is Cytoplasmic tRNA 2-thiolation protein 1 (379 aa).

It belongs to the TtcA family. CTU1/NCS6/ATPBD3 subfamily.

The protein resides in the cytoplasm. Its pathway is tRNA modification; 5-methoxycarbonylmethyl-2-thiouridine-tRNA biosynthesis. Its function is as follows. Plays a central role in 2-thiolation of mcm(5)S(2)U at tRNA wobble positions of tRNA(Lys), tRNA(Glu) and tRNA(Gln). Directly binds tRNAs and probably acts by catalyzing adenylation of tRNAs, an intermediate required for 2-thiolation. It is unclear whether it acts as a sulfurtransferase that transfers sulfur from thiocarboxylated URM1 onto the uridine of tRNAs at wobble position. Prior mcm(5) tRNA modification by the elongator complex is required for 2-thiolation. May also be involved in protein urmylation. The sequence is that of Cytoplasmic tRNA 2-thiolation protein 1 from Lodderomyces elongisporus (strain ATCC 11503 / CBS 2605 / JCM 1781 / NBRC 1676 / NRRL YB-4239) (Yeast).